Reading from the N-terminus, the 193-residue chain is Ion-translocating oxidoreductase complex subunit A (193 aa).

Transmembrane regions (helical) follow at residues 5–25, 47–67, 72–92, 102–122, 134–154, and 171–191; these read LLLF…FLGL, FVMT…LIPL, LRTL…EMVV, LLGI…VALL, ALYG…FAAI, and AIAL…SGLV.

The protein belongs to the NqrDE/RnfAE family. In terms of assembly, the complex is composed of six subunits: RnfA, RnfB, RnfC, RnfD, RnfE and RnfG.

It localises to the cell inner membrane. In terms of biological role, part of a membrane-bound complex that couples electron transfer with translocation of ions across the membrane. This Citrobacter koseri (strain ATCC BAA-895 / CDC 4225-83 / SGSC4696) protein is Ion-translocating oxidoreductase complex subunit A.